Consider the following 327-residue polypeptide: Aquaporin-1 (327 aa).

Residues 1 to 34 (MSSNDSNDTDKQHTRLDPTGVDDAYIPPEQPETK) are disordered. Residues 1–48 (MSSNDSNDTDKQHTRLDPTGVDDAYIPPEQPETKHHRFKISRDTLRNH) lie on the Cytoplasmic side of the membrane. A helical membrane pass occupies residues 49-69 (FIAAVGEFCGTFMFLWCAYVI). The Extracellular segment spans residues 70-91 (CNVANHDVALVAAPDGSHPGQL). A helical membrane pass occupies residues 92-112 (IMIAIGFGFSVMFSIWCFAGV). Topologically, residues 113-136 (SGGALNPAVSLSLCLARAVSPTRC) are cytoplasmic. The NPA 1 motif lies at 118 to 120 (NPA). A helical membrane pass occupies residues 137–157 (VVMWVSQIVAGMAAGGAASAM). Residues 158-176 (TPGEVLFANSLGLGCSRTR) lie on the Extracellular side of the membrane. A helical transmembrane segment spans residues 177-197 (GLFLEMFGTAILCLTVLMTAV). At 198–203 (EKRETN) the chain is on the cytoplasmic side. The chain crosses the membrane as a helical span at residues 204-224 (FMAALPIGISLFIAHVALTAY). Over 225–248 (TGTGVNPARSLGAAVAARYFPHYH) the chain is Extracellular. The NPA 2 signature appears at 230–232 (NPA). The chain crosses the membrane as a helical span at residues 249–269 (WIYWIGPLLGSILAWSVWQLL). The Cytoplasmic portion of the chain corresponds to 270–327 (QILDYTTYVTAEKAASTKEKAQKKVKPAVPLLWLKSNFPLLFFISRSLALNVIIFGKN).

Belongs to the MIP/aquaporin (TC 1.A.8) family.

The protein localises to the endoplasmic reticulum membrane. The protein resides in the cell membrane. Functionally, water channel required to facilitate the transport of water across membranes. Involved in sporulation, freeze tolerance and osmotolerance. Is non-functional in most laboratory strains. In Saccharomyces cerevisiae (Baker's yeast), this protein is Aquaporin-1 (AQY1).